An 85-amino-acid chain; its full sequence is Photosystem I reaction center subunit PsaK (85 aa).

Helical transmembrane passes span Thr-12 to Gly-34 and Gly-54 to Ile-76.

It belongs to the PsaG/PsaK family.

The protein resides in the cellular thylakoid membrane. This chain is Photosystem I reaction center subunit PsaK, found in Parasynechococcus marenigrum (strain WH8102).